The following is an 82-amino-acid chain: Translation initiation factor IF-1, chloroplastic (82 aa).

One can recognise an S1-like domain in the interval Met-1–Arg-72.

It belongs to the IF-1 family. In terms of assembly, component of the 30S ribosomal translation pre-initiation complex which assembles on the 30S ribosome in the order IF-2 and IF-3, IF-1 and N-formylmethionyl-tRNA(fMet); mRNA recruitment can occur at any time during PIC assembly.

Its subcellular location is the plastid. It localises to the chloroplast. One of the essential components for the initiation of protein synthesis. Stabilizes the binding of IF-2 and IF-3 on the 30S subunit to which N-formylmethionyl-tRNA(fMet) subsequently binds. Helps modulate mRNA selection, yielding the 30S pre-initiation complex (PIC). Upon addition of the 50S ribosomal subunit IF-1, IF-2 and IF-3 are released leaving the mature 70S translation initiation complex. This is Translation initiation factor IF-1, chloroplastic from Cycas taitungensis (Prince sago).